Consider the following 234-residue polypeptide: MEGGAYGAGKAGGAFDPYALVRQPHTILRVVSWLFSIVVFGSIVNEGYLNSASEGEEFCIYNRNPNACSYGVAVGVLAFLTCLLYLALDVYFPQISSVKDRKKAVLSDIGVSAFWAFLWFVGFCYLANQWQVSKPKDNPLNEGTDAARAAIAFSFFSIFTWAGQAVLAFQRYQIGADSALFSQDYMDPSQDSSMPYAPYVEPSTGPDPAGMGGTYQQPANTFDTEPQGYQSQGY.

Methionine 1 bears the N-acetylmethionine mark. Topologically, residues methionine 1 to glutamine 23 are cytoplasmic. In terms of domain architecture, MARVEL spans leucine 20 to glutamine 173. A helical membrane pass occupies residues proline 24–valine 44. Residues asparagine 45 to glycine 71 are Lumenal-facing. Residues valine 72–phenylalanine 92 form a helical membrane-spanning segment. Over proline 93–lysine 103 the chain is Cytoplasmic. The helical transmembrane segment at alanine 104–cysteine 124 threads the bilayer. At tyrosine 125–arginine 148 the chain is on the lumenal side. The chain crosses the membrane as a helical span at residues alanine 149 to phenylalanine 169. At glutamine 170 to tyrosine 234 the chain is on the cytoplasmic side. The disordered stretch occupies residues serine 192–tyrosine 234. Over residues threonine 214 to tyrosine 234 the composition is skewed to polar residues.

This sequence belongs to the synaptogyrin family.

The protein localises to the cytoplasmic vesicle. It localises to the secretory vesicle. The protein resides in the synaptic vesicle membrane. It is found in the melanosome. May play a role in regulated exocytosis. Modulates the localization of synaptophysin/SYP into synaptic-like microvesicles and may therefore play a role in synaptic-like microvesicle formation and/or maturation. Involved in the regulation of short-term and long-term synaptic plasticity. In Pongo abelii (Sumatran orangutan), this protein is Synaptogyrin-1.